Here is a 98-residue protein sequence, read N- to C-terminus: uncharacterized protein (98 aa).

A helical membrane pass occupies residues 10–30 (LYGFFAVTGVLIASFIIGEIV).

The protein resides in the host membrane. This is an uncharacterized protein from Saccharolobus islandicus (Sulfolobus islandicus).